The chain runs to 180 residues: Adenine phosphoribosyltransferase (180 aa).

Belongs to the purine/pyrimidine phosphoribosyltransferase family. As to quaternary structure, homodimer.

It is found in the cytoplasm. It catalyses the reaction AMP + diphosphate = 5-phospho-alpha-D-ribose 1-diphosphate + adenine. It participates in purine metabolism; AMP biosynthesis via salvage pathway; AMP from adenine: step 1/1. In terms of biological role, catalyzes a salvage reaction resulting in the formation of AMP, that is energically less costly than de novo synthesis. In Mannheimia succiniciproducens (strain KCTC 0769BP / MBEL55E), this protein is Adenine phosphoribosyltransferase.